Reading from the N-terminus, the 189-residue chain is 3-isopropylmalate dehydratase small subunit (189 aa).

Belongs to the LeuD family. LeuD type 1 subfamily. As to quaternary structure, heterodimer of LeuC and LeuD.

The enzyme catalyses (2R,3S)-3-isopropylmalate = (2S)-2-isopropylmalate. The protein operates within amino-acid biosynthesis; L-leucine biosynthesis; L-leucine from 3-methyl-2-oxobutanoate: step 2/4. In terms of biological role, catalyzes the isomerization between 2-isopropylmalate and 3-isopropylmalate, via the formation of 2-isopropylmaleate. The chain is 3-isopropylmalate dehydratase small subunit from Francisella tularensis subsp. holarctica (strain FTNF002-00 / FTA).